Here is a 448-residue protein sequence, read N- to C-terminus: Beclin-1 (448 aa).

Methionine 1 carries the post-translational modification N-acetylmethionine. Phosphoserine is present on residues serine 14 and serine 29. Serine 88, serine 91, and serine 94 each carry phosphoserine; by AMPK. Positions 106-125 (TMENLSRRLKVTGDLFDIMS) match the BH3 motif. The segment at 110–157 (LSRRLKVTGDLFDIMSGQTDVDHPLCEECTDTLLDQLDTQLNVTENEC) is interaction with BCL2 and BCL2L1. Position 117 is a phosphothreonine; by DAPK1 (threonine 117). Positions 140–267 (DTLLDQLDTQ…QLDKLKKTNV (128 aa)) form a coiled coil. The tract at residues 243–448 (DELKSVENQM…AWVSSQFYNK (206 aa)) is evolutionary conserved domain (ECD). Residues lysine 400 and lysine 435 each participate in a glycyl lysine isopeptide (Lys-Gly) (interchain with G-Cter in ubiquitin) cross-link. A required for membrane-association region spans residues 423 to 448 (WTKALKFMLTNLKWGLAWVSSQFYNK).

This sequence belongs to the beclin family. In terms of assembly, a homodimeric form is proposed to exist; this metastable form readily transits to ATG14- or UVRAG-containing complexes with BECN1:UVRAG being more stable than BECN1:ATG14. Component of the PI3K (PI3KC3/PI3K-III/class III phosphatidylinositol 3-kinase) complex the core of which is composed of the catalytic subunit PIK3C3, the regulatory subunit PIK3R4 and BECN1 associating with additional regulatory/auxiliary subunits to form alternative complex forms. Alternative complex forms containing a fourth regulatory subunit in a mutually exclusive manner are PI3K complex I (PI3KC3-C1) containing ATG14, and PI3K complex II (PI3KC3-C2) containing UVRAG. PI3KC3-C1 displays a V-shaped architecture with PIK3R4 serving as a bridge between PIK3C3 and the ATG14:BECN1 subcomplex. Both, PI3KC3-C1 and PI3KC3-C2, can associate with further regulatory subunits, such as RUBCN, SH3GLB1/Bif-1 and AMBRA1. PI3KC3-C1 probably associates with PIK3CB. Forms a complex with PPP2CA and AMBRA1; AMBRA1 and BECN1 components of the complex regulate MYC stability via different pathways. Component of the complex, at least composed of LRPPRC, BECN1 and BCL2; the interactions prevent BECN1 from forming an autophagy-inducing complex with PIK3C3. Interacts with AMBRA1, GOPC, GRID2. Interacts with BCL2 and BCL2L1 isoform Bcl-X(L); the interaction inhibits BECN1 function in promoting autophagy by interfering with the formation of the PI3K complex. Interacts with cytosolic HMGB1; inhibits the interaction of BECN1 and BCL2 leading to promotion of autophagy. Interacts with USP10, USP13, VMP1, DAPK1, RAB39A. Interacts with the poly-Gln domain of ATXN3; the interaction causes deubiquitination at Lys-400 and stabilizes BECN1. Interacts with SLAMF1. Interacts with TRIM5; the interaction causes activation of BECN1 by causing its dissociation from its inhibitors BCL2 and TAB2. Interacts with active ULK1 (phosphorylated on 'Ser-317') and MEFV simultaneously. Interacts with WDR81 and WDR91; negatively regulates the PI3 kinase/PI3K activity associated with endosomal membranes. Interacts with LAPTM4B; competes with EGFR for LAPTM4B binding; regulates EGFR activity. Interacts with TRIM50. Interacts with TRIM16. Interacts with ATG14; this interaction is increased in the absence of TMEM39A. Interacts with WASHC1; preventing interaction with AMBRA1 and the DCX(AMBRA1) complex and subsequent ubiquitination. Interacts with TRIM17. Interacts with BCL2L10/BCL-B (via BH1 domain). Interacts with SH3BGRL. Interacts with IRGM; enhancing BECN1-interacting partners and influencing the composition of the BECN1 complex. Interacts with ARMC3. Interacts with LRPPRC. As to quaternary structure, (Microbial infection) Interacts with African swine fever virus (ASFV) apoptosis regulator Bcl-2 homolog; this interaction allows the virus to inhibit BECN1, and thus autophagy. Post-translationally, phosphorylation at Thr-117 by DAPK1 reduces its interaction with BCL2 and BCL2L1 and promotes induction of autophagy. In response to autophagic stimuli, phosphorylated at serine residues by AMPK in an ATG14-dependent manner, and this phosphorylation is critical for maximally efficient autophagy. Polyubiquitinated by NEDD4, both with 'Lys-11'- and 'Lys-63'-linkages. 'Lys-11'-linked polyubiquitination leads to degradation and is enhanced when the stabilizing interaction partner VPS34 is depleted. Deubiquitinated by USP10 and USP13, leading to stabilize the PIK3C3/VPS34-containing complexes. Polyubiquitinated at Lys-400 with 'Lys-48'-linkages. 'Lys-48'-linked polyubiquitination of Lys-400 leads to degradation. Deubiquitinated by ATXN3, leading to stabilization. Ubiquitinated at Lys-435 via 'Lys-63'-linkage by the DCX(AMBRA1) complex, thereby increasing the association between BECN1 and PIK3C3 to promote PIK3C3 activity. 'Lys-48'-linked ubiquitination by RNF216 leads to proteasomal degradation and autophagy inhibition. In terms of processing, proteolytically processed by caspases including CASP8 and CASP3; the C-terminal fragments lack autophagy-inducing capacity and are proposed to induce apoptosis. Thus the cleavage is proposed to be an determinant to switch from autophagy to apoptosis pathways affecting cellular homeostasis including viral infections and survival of tumor cells.

It is found in the cytoplasm. Its subcellular location is the golgi apparatus. The protein localises to the trans-Golgi network membrane. It localises to the endosome membrane. The protein resides in the endoplasmic reticulum membrane. It is found in the mitochondrion membrane. Its subcellular location is the cytoplasmic vesicle. The protein localises to the autophagosome. It localises to the mitochondrion. The protein resides in the nucleus. In terms of biological role, plays a central role in autophagy. Acts as a core subunit of the PI3K complex that mediates formation of phosphatidylinositol 3-phosphate; different complex forms are believed to play a role in multiple membrane trafficking pathways: PI3KC3-C1 is involved in initiation of autophagosomes and PI3KC3-C2 in maturation of autophagosomes and endocytosis. Involved in regulation of degradative endocytic trafficking and required for the abscission step in cytokinesis, probably in the context of PI3KC3-C2. Essential for the formation of PI3KC3-C2 but not PI3KC3-C1 PI3K complex forms. Involved in endocytosis. May play a role in antiviral host defense. Functionally, beclin-1-C 35 kDa localized to mitochondria can promote apoptosis; it induces the mitochondrial translocation of BAX and the release of proapoptotic factors. The protein is Beclin-1 (BECN1) of Sus scrofa (Pig).